A 429-amino-acid polypeptide reads, in one-letter code: Serine carboxypeptidase-like (429 aa).

3 cysteine pairs are disulfide-bonded: cysteine 58/cysteine 298, cysteine 226/cysteine 241, and cysteine 264/cysteine 269. Residue asparagine 76 is glycosylated (N-linked (GlcNAc...) asparagine). The active site involves serine 148. Aspartate 336 is a catalytic residue. Cysteine 339 is a binding site for substrate. The active site involves histidine 393. N-linked (GlcNAc...) asparagine glycosylation is found at asparagine 414 and asparagine 417.

Belongs to the peptidase S10 family. As to expression, abundant in germinated embryos composed of leaf, root, and scutellum.

This Oryza sativa subsp. japonica (Rice) protein is Serine carboxypeptidase-like (CBP31).